Reading from the N-terminus, the 445-residue chain is FAD-dependent monooxygenase sorC (445 aa).

A helical transmembrane segment spans residues 8–28 (PFEVAIVGGGITGLALAVGLL). N31 is a glycosylation site (N-linked (GlcNAc...) asparagine). Positions 38 and 119 each coordinate FAD. Residue R201 is part of the active site. D323 and A336 together coordinate FAD. N358 carries N-linked (GlcNAc...) asparagine glycosylation.

The protein belongs to the paxM FAD-dependent monooxygenase family. FAD serves as cofactor.

It localises to the membrane. Its pathway is secondary metabolite biosynthesis. In terms of biological role, FAD-dependent monooxygenase; part of the gene cluster that mediates the biosynthesis of sorbicillinoids, a diverse group of yellow secondary metabolites that restrict growth of competing pathogenic fungi but not of bacteria. Sorbicillinoids biosynthesis requires the action of two PKSs. SorA iteratively combines three acetyl units and the growing chain is modified by the ketoacyl reductase subunit, and optional by the enoyl reductase subunit in the second cycle. The polyketide is then handed over to the PKS SorB, which adds three more acetyl units, and two methyl groups. SorB releases an aldehyde, which undergoes spontaneous cyclization resulting in the formation of sorbicillin or 2',3'-dihydrosorbicillin. The monooxygenase sorC oxidizes sorbicillin and 2',3'-dihydrosorbicillin to 2',3'-dihydrosorbicillinol and sorbicillinol, respectively. The oxidoreductase sorD further converts sorbicillinol into oxosorbicillinol. Sorbicillinol is the building block for the other sorbicillinoids such as disorbicillinol, bisvertinolon, and dihydrobisvertinolone. In Penicillium rubens (strain ATCC 28089 / DSM 1075 / NRRL 1951 / Wisconsin 54-1255) (Penicillium chrysogenum), this protein is FAD-dependent monooxygenase sorC.